We begin with the raw amino-acid sequence, 329 residues long: Probable ABC transporter permease protein MG188 homolog (329 aa).

6 helical membrane-spanning segments follow: residues 30 to 50, 96 to 116, 128 to 148, 176 to 196, 234 to 254, and 283 to 303; these read FLLFCPALLTTFLFTLVPFFL, IISLPLTIVLAIIISSAIVFV, VFFLPYVTSGVAVSIAFIYIL, ALWGILIFGIWKNMAFNVLVI, LIFLLTLLILGGMQVFPISLF, and NFAGAATLVLFILGVCYGLVL. The ABC transmembrane type-1 domain occupies 88–303; that stretch reads LRNSFLYSII…ILGVCYGLVL (216 aa).

The protein belongs to the binding-protein-dependent transport system permease family. MalFG subfamily.

Its subcellular location is the cell membrane. Probably part of a binding-protein-dependent transport system. Probably responsible for the translocation of the substrate across the membrane. This Mycoplasma pneumoniae (strain ATCC 29342 / M129 / Subtype 1) (Mycoplasmoides pneumoniae) protein is Probable ABC transporter permease protein MG188 homolog.